Reading from the N-terminus, the 431-residue chain is MGKNVVVLGTQWGDEGKGKIVDLLTQDAQVVVRYQGGHNAGHTLKINGVKTVLRLIPSGMLRPNVTCYVANGVVLSPQALLSEIKELEGNGINVRERLRISLACPLILPYHIALDKARETHMGKSAIGTTGRGIGPAYEDKVARRALRVGDLFHRDRFANKLTELLDYHNFVLTQYFKQPAVDLESLLDESLQWAEELRPMVCDVSACLHEHRKQGENILFEGAQGVYLDIDHGTYPYVTSSNTCVGSVINGAGFGPRYIDYVLGITKAYTTRVGGGPFPTELLDDVGKRIAERGQEFGAVTGRPRRCGWFDAVLLKRSIELNSISGLCVTKLDVLDGLEVLRIAVAYKDRDGNILSRPPLAADDFNDLLPVYEELPGWQESTADVTVMSDLPANARAYLKRIEEILGIPIDMLSTGPERDSTITLRDPFL.

GTP contacts are provided by residues 13 to 19 (GDEGKGK) and 41 to 43 (GHT). Residue Asp14 is the Proton acceptor of the active site. Positions 14 and 41 each coordinate Mg(2+). IMP contacts are provided by residues 14-17 (DEGK), 39-42 (NAGH), Thr130, Arg144, Gln225, Thr240, and Arg304. The Proton donor role is filled by His42. Substrate is bound at residue 300 to 306 (AVTGRPR). GTP-binding positions include Arg306, 332–334 (KLD), and 415–417 (STG).

It belongs to the adenylosuccinate synthetase family. As to quaternary structure, homodimer. It depends on Mg(2+) as a cofactor.

It is found in the cytoplasm. The catalysed reaction is IMP + L-aspartate + GTP = N(6)-(1,2-dicarboxyethyl)-AMP + GDP + phosphate + 2 H(+). The protein operates within purine metabolism; AMP biosynthesis via de novo pathway; AMP from IMP: step 1/2. Functionally, plays an important role in the de novo pathway of purine nucleotide biosynthesis. Catalyzes the first committed step in the biosynthesis of AMP from IMP. The polypeptide is Adenylosuccinate synthetase (Legionella pneumophila (strain Lens)).